The primary structure comprises 182 residues: Transcription termination/antitermination protein NusG (182 aa).

The protein belongs to the NusG family.

Its function is as follows. Participates in transcription elongation, termination and antitermination. The chain is Transcription termination/antitermination protein NusG from Chlamydia trachomatis serovar D (strain ATCC VR-885 / DSM 19411 / UW-3/Cx).